The primary structure comprises 708 residues: DNA ligase 2 (708 aa).

NAD(+) is bound by residues D71–D75, S121–L122, and E153. K155 acts as the N6-AMP-lysine intermediate in catalysis. Positions 176, 213, 330, and 354 each coordinate NAD(+). Zn(2+)-binding residues include C448, C451, C466, and C471. Residues A627 to E708 enclose the BRCT domain.

This sequence belongs to the NAD-dependent DNA ligase family. LigA subfamily. The cofactor is Mg(2+). Mn(2+) is required as a cofactor.

The catalysed reaction is NAD(+) + (deoxyribonucleotide)n-3'-hydroxyl + 5'-phospho-(deoxyribonucleotide)m = (deoxyribonucleotide)n+m + AMP + beta-nicotinamide D-nucleotide.. In terms of biological role, DNA ligase that catalyzes the formation of phosphodiester linkages between 5'-phosphoryl and 3'-hydroxyl groups in double-stranded DNA using NAD as a coenzyme and as the energy source for the reaction. It is essential for DNA replication and repair of damaged DNA. The chain is DNA ligase 2 from Opitutus terrae (strain DSM 11246 / JCM 15787 / PB90-1).